A 189-amino-acid polypeptide reads, in one-letter code: Crossover junction endodeoxyribonuclease RuvC (189 aa).

Catalysis depends on residues D11, E71, and D143. Mg(2+) is bound by residues D11, E71, and D143.

This sequence belongs to the RuvC family. Homodimer which binds Holliday junction (HJ) DNA. The HJ becomes 2-fold symmetrical on binding to RuvC with unstacked arms; it has a different conformation from HJ DNA in complex with RuvA. In the full resolvosome a probable DNA-RuvA(4)-RuvB(12)-RuvC(2) complex forms which resolves the HJ. Mg(2+) is required as a cofactor.

Its subcellular location is the cytoplasm. It carries out the reaction Endonucleolytic cleavage at a junction such as a reciprocal single-stranded crossover between two homologous DNA duplexes (Holliday junction).. Functionally, the RuvA-RuvB-RuvC complex processes Holliday junction (HJ) DNA during genetic recombination and DNA repair. Endonuclease that resolves HJ intermediates. Cleaves cruciform DNA by making single-stranded nicks across the HJ at symmetrical positions within the homologous arms, yielding a 5'-phosphate and a 3'-hydroxyl group; requires a central core of homology in the junction. The consensus cleavage sequence is 5'-(A/T)TT(C/G)-3'. Cleavage occurs on the 3'-side of the TT dinucleotide at the point of strand exchange. HJ branch migration catalyzed by RuvA-RuvB allows RuvC to scan DNA until it finds its consensus sequence, where it cleaves and resolves the cruciform DNA. The polypeptide is Crossover junction endodeoxyribonuclease RuvC (Methylorubrum extorquens (strain CM4 / NCIMB 13688) (Methylobacterium extorquens)).